A 469-amino-acid chain; its full sequence is tRNA(Ile)-lysidine synthase (469 aa).

26–31 (SGGPDS) contributes to the ATP binding site.

Belongs to the tRNA(Ile)-lysidine synthase family.

The protein resides in the cytoplasm. The catalysed reaction is cytidine(34) in tRNA(Ile2) + L-lysine + ATP = lysidine(34) in tRNA(Ile2) + AMP + diphosphate + H(+). In terms of biological role, ligates lysine onto the cytidine present at position 34 of the AUA codon-specific tRNA(Ile) that contains the anticodon CAU, in an ATP-dependent manner. Cytidine is converted to lysidine, thus changing the amino acid specificity of the tRNA from methionine to isoleucine. The chain is tRNA(Ile)-lysidine synthase from Clostridium perfringens (strain 13 / Type A).